The following is a 412-amino-acid chain: [Pyruvate dehydrogenase (acetyl-transferring)] kinase isozyme 4, mitochondrial (412 aa).

One can recognise a Histidine kinase domain in the interval 138 to 368 (ILEYKDNCTV…DAIIYLKALS (231 aa)). Residues 254 to 261 (ELFKNAMR), D293, 312 to 313 (ST), and 329 to 334 (GFGYGL) contribute to the ATP site.

This sequence belongs to the PDK/BCKDK protein kinase family. As to quaternary structure, homodimer. Interacts with the pyruvate dehydrogenase complex subunit DLAT, and is part of the multimeric pyruvate dehydrogenase complex that contains multiple copies of pyruvate dehydrogenase (E1), dihydrolipoamide acetyltransferase (DLAT, E2) and lipoamide dehydrogenase (DLD, E3). As to expression, ubiquitous; highest levels of expression in heart and skeletal muscle.

The protein resides in the mitochondrion matrix. The enzyme catalyses L-seryl-[pyruvate dehydrogenase E1 alpha subunit] + ATP = O-phospho-L-seryl-[pyruvate dehydrogenase E1 alpha subunit] + ADP + H(+). Functionally, kinase that plays a key role in regulation of glucose and fatty acid metabolism and homeostasis via phosphorylation of the pyruvate dehydrogenase subunits PDHA1 and PDHA2. This inhibits pyruvate dehydrogenase activity, and thereby regulates metabolite flux through the tricarboxylic acid cycle, down-regulates aerobic respiration and inhibits the formation of acetyl-coenzyme A from pyruvate. Inhibition of pyruvate dehydrogenase decreases glucose utilization and increases fat metabolism in response to prolonged fasting and starvation. Plays an important role in maintaining normal blood glucose levels under starvation, and is involved in the insulin signaling cascade. Via its regulation of pyruvate dehydrogenase activity, plays an important role in maintaining normal blood pH and in preventing the accumulation of ketone bodies under starvation. In the fed state, mediates cellular responses to glucose levels and to a high-fat diet. Regulates both fatty acid oxidation and de novo fatty acid biosynthesis. Plays a role in the generation of reactive oxygen species. Protects detached epithelial cells against anoikis. Plays a role in cell proliferation via its role in regulating carbohydrate and fatty acid metabolism. The protein is [Pyruvate dehydrogenase (acetyl-transferring)] kinase isozyme 4, mitochondrial (Pdk4) of Rattus norvegicus (Rat).